A 269-amino-acid polypeptide reads, in one-letter code: AA9 family lytic polysaccharide monooxygenase I (269 aa).

Residues 1-17 (MFSKKITALALVSAVKA) form the signal peptide. Cu(2+)-binding residues include His-18 and His-103. A disulfide bridge links Cys-73 with Cys-196. N-linked (GlcNAc...) asparagine glycosylation occurs at Asn-156. O2 is bound by residues His-182 and Gln-191. Tyr-193 serves as a coordination point for Cu(2+).

This sequence belongs to the polysaccharide monooxygenase AA9 family. It depends on Cu(2+) as a cofactor.

The protein resides in the secreted. It carries out the reaction [(1-&gt;4)-beta-D-glucosyl]n+m + reduced acceptor + O2 = 4-dehydro-beta-D-glucosyl-[(1-&gt;4)-beta-D-glucosyl]n-1 + [(1-&gt;4)-beta-D-glucosyl]m + acceptor + H2O.. Lytic polysaccharide monooxygenase (LPMO) that depolymerizes crystalline and amorphous polysaccharides via the oxidation of scissile alpha- or beta-(1-4)-glycosidic bonds, yielding C1 and C4 oxidation products. Catalysis by LPMOs requires the reduction of the active-site copper from Cu(II) to Cu(I) by a reducing agent and H(2)O(2) or O(2) as a cosubstrate. This is AA9 family lytic polysaccharide monooxygenase I from Botryotinia fuckeliana (strain B05.10) (Noble rot fungus).